The chain runs to 210 residues: Protoporphyrinogen IX oxidase (210 aa).

5 helical membrane passes run 22 to 42 (WFKA…FYLV), 74 to 94 (YNII…GLIF), 103 to 123 (GWLH…FYCG), 141 to 161 (FRAL…LAVF), and 165 to 185 (LPLD…AASI). Histidine 27 lines the heme pocket. Lysine 108 contacts heme.

Belongs to the HemJ family. Homodimer. Can also form higher oligomers, most probably tetramers. Interacts with Sll1106, however it is unlikely that Sll1106 is required for PPO function. Requires heme b as cofactor.

It localises to the cell membrane. The enzyme catalyses protoporphyrinogen IX + 3 A = protoporphyrin IX + 3 AH2. The protein operates within porphyrin-containing compound metabolism; protoporphyrin-IX biosynthesis; protoporphyrin-IX from protoporphyrinogen-IX: step 1/1. Catalyzes the oxidation of protoporphyrinogen IX to protoporphyrin IX. Is involved in the biosynthesis of tetrapyrrole molecules like heme and chlorophyll. Does not use oxygen or artificial electron acceptors such as menadione or benzoquinone. Is functionally coupled with coproporphyrinogen III oxidase (CPO). Is essential for growth. This Synechocystis sp. (strain ATCC 27184 / PCC 6803 / Kazusa) protein is Protoporphyrinogen IX oxidase.